A 394-amino-acid chain; its full sequence is Ceramide glucosyltransferase (394 aa).

Residues 1–10 (MALLDLALEG) lie on the Lumenal side of the membrane. Residues 11-32 (MAVFGFVLFLVLWLMHFMAIIY) form a helical membrane-spanning segment. The Cytoplasmic portion of the chain corresponds to 33–195 (TRLHLNKKAT…QVYFGTSHPR (163 aa)). A short sequence motif (D1) is located at residue Asp-92. The residue at position 117 (Lys-117) is an N6-acetyllysine. Position 144 (Asp-144) is a short sequence motif, D2. A helical membrane pass occupies residues 196–215 (YYISANVTGFKCVTGMSCLM). Topologically, residues 216 to 287 (RKDVLDQAGG…KLRINMLPAT (72 aa)) are lumenal. Asp-236 is a short sequence motif (D3). The active-site Proton acceptor is Asp-236. A (Q/R)XXRW motif is present at residues 272–276 (RMIRW). A helical membrane pass occupies residues 288–304 (IICEPISECFVASLIIG). Over 305–309 (WAAHH) the chain is Cytoplasmic. Residues 310-328 (VFRWDIMVFFMCHCLAWFI) traverse the membrane as a helical segment. The Lumenal portion of the chain corresponds to 329 to 348 (FDYIQLRGVQGGTLCFSKLD). The helical transmembrane segment at 349 to 369 (YAVAWFIRESMTIYIFLSALW) threads the bilayer. The Cytoplasmic segment spans residues 370–394 (DPTISWRTGRYRLRCGGTAEEILDV).

This sequence belongs to the glycosyltransferase 2 family. Interacts with RTN1; regulates the ceramide glucosyltransferase activity of UGCG. In terms of tissue distribution, found in all tissues examined.

The protein localises to the golgi apparatus membrane. The catalysed reaction is an N-acylsphing-4-enine + UDP-alpha-D-glucose = a beta-D-glucosyl-(1&lt;-&gt;1')-N-acylsphing-4-enine + UDP + H(+). The enzyme catalyses UDP-alpha-D-xylose + an N-acylsphing-4-enine = a beta-D-xylosyl-(1&lt;-&gt;1')-N-acylsphing-4-enine + UDP + H(+). It carries out the reaction N-(9Z-octadecenoyl)-sphing-4-enine + UDP-alpha-D-xylose = beta-D-xylosyl-(1&lt;-&gt;1')-N-(9Z-octadecenoyl)-sphing-4-enine + UDP + H(+). Its pathway is lipid metabolism; sphingolipid metabolism. Participates in the initial step of the glucosylceramide-based glycosphingolipid/GSL synthetic pathway at the cytosolic surface of the Golgi. Catalyzes the transfer of glucose from UDP-glucose to ceramide to produce glucosylceramide/GlcCer (such as beta-D-glucosyl-(1&lt;-&gt;1')-N-acylsphing-4-enine). GlcCer is the core component of glycosphingolipids/GSLs, amphipathic molecules consisting of a ceramide lipid moiety embedded in the outer leaflet of the membrane, linked to one of hundreds of different externally oriented oligosaccharide structures. Glycosphingolipids are essential components of membrane microdomains that mediate membrane trafficking and signal transduction, implicated in many fundamental cellular processes, including growth, differentiation, migration, morphogenesis, cell-to-cell and cell-to-matrix interactions. They are required for instance in the proper development and functioning of the nervous system. As an example of their role in signal transduction, they regulate the leptin receptor/LEPR in the leptin-mediated signaling pathway. They also play an important role in the establishment of the skin barrier regulating keratinocyte differentiation and the proper assembly of the cornified envelope. The biosynthesis of GSLs is also required for the proper intestinal endocytic uptake of nutritional lipids. Catalyzes the synthesis of xylosylceramide/XylCer (such as beta-D-xylosyl-(1&lt;-&gt;1')-N-acylsphing-4-enine) using UDP-Xyl as xylose donor. The sequence is that of Ceramide glucosyltransferase from Homo sapiens (Human).